The chain runs to 130 residues: Single-stranded DNA-binding protein 1 (130 aa).

Residues 1–104 enclose the SSB domain; that stretch reads MINNVVLIGR…VVAESFQILE (104 aa). The disordered stretch occupies residues 108–130; the sequence is NTANTSSLADSMPDYGPEPDLPF.

Homotetramer.

This Streptococcus pyogenes serotype M18 (strain MGAS8232) protein is Single-stranded DNA-binding protein 1 (ssb1).